Here is a 701-residue protein sequence, read N- to C-terminus: A-type ATP synthase subunit I (701 aa).

10 helical membrane passes run 340–360 (WEIS…GLMF), 363–379 (FGNA…FYRY), 388–408 (IPKL…TGLL), 435–455 (LYNL…LLPF), 468–488 (MIFS…LGVI), 498–518 (FLFL…FIFM), 555–575 (GIVW…AILV), 583–603 (WGSA…LLLL), 612–632 (VLVF…MAYL), and 649–669 (IIIL…VVFI).

The protein belongs to the V-ATPase 116 kDa subunit family. In terms of assembly, has multiple subunits with at least A(3), B(3), C, D, E, F, H, I and proteolipid K(x).

It localises to the cell membrane. In terms of biological role, component of the A-type ATP synthase that produces ATP from ADP in the presence of a proton gradient across the membrane. This Saccharolobus solfataricus (strain ATCC 35092 / DSM 1617 / JCM 11322 / P2) (Sulfolobus solfataricus) protein is A-type ATP synthase subunit I.